We begin with the raw amino-acid sequence, 467 residues long: Probable lipase C1672.09 (467 aa).

At 1 to 17 the chain is on the cytoplasmic side; that stretch reads MIQLPFIQRLKWEEYMA. A helical; Signal-anchor for type II membrane protein transmembrane segment spans residues 18 to 38; sequence LFLGFFFVIFEKLLSCLAFMI. Over 39-467 the chain is Lumenal; that stretch reads HNTLGLFYRS…NHIAPRNKPI (429 aa). Ser-66 is subject to Phosphoserine. Residues 127–421 enclose the AB hydrolase-1 domain; the sequence is PVVYCHHGLL…SYEHLDMIWA (295 aa). Ser-222 (nucleophile) is an active-site residue. Asn-311 and Asn-316 each carry an N-linked (GlcNAc...) asparagine glycan. Active-site charge relay system residues include Asp-389 and His-415. Basic and acidic residues predominate over residues 440–457; it reads HHPPEHEENDKENREIQK. The tract at residues 440–467 is disordered; sequence HHPPEHEENDKENREIQKNHIAPRNKPI.

It belongs to the AB hydrolase superfamily. Lipase family.

The protein localises to the cytoplasm. It localises to the membrane. Functionally, probable lipase. The protein is Probable lipase C1672.09 of Schizosaccharomyces pombe (strain 972 / ATCC 24843) (Fission yeast).